A 538-amino-acid polypeptide reads, in one-letter code: Lipid scramblase CLPTM1L (538 aa).

At 1 to 10 (MWSGRSSFTS) the chain is on the cytoplasmic side. The helical transmembrane segment at 11–31 (LVVGVFVVYVVHTCWVMYGIV) threads the bilayer. Residues 32 to 284 (YTRPCSGDAN…VKGIFVDTNL (253 aa)) are Extracellular-facing. Asn-91, Asn-101, and Asn-229 each carry an N-linked (GlcNAc...) asparagine glycan. Residues 285-305 (YFLALTFFVAAFHLLFDFLAF) traverse the membrane as a helical segment. The Cytoplasmic portion of the chain corresponds to 306-324 (KNDISFWKKKKSMIGMSTK). Residues 325–342 (AVLWRCFSTVVIFLFLLD) traverse the membrane as a helical segment. The Extracellular portion of the chain corresponds to 343–346 (EQTS). Residues 347–364 (LLVLVPAGVGAAIELWKV) form a helical membrane-spanning segment. Residues 365 to 402 (KKALKMTIFWRGLMPEFQFGTYSESERKTEEYDTQAMK) are Cytoplasmic-facing. A helical transmembrane segment spans residues 403–423 (YLSYLLYPLCVGGAVYSLLNI). Over 424-428 (KYKSW) the chain is Extracellular. Residues 429 to 449 (YSWLINSFVNGVYAFGFLFML) form a helical membrane-spanning segment. Topologically, residues 450–538 (PQLFVNYKLK…EKATRAPHTD (89 aa)) are cytoplasmic.

This sequence belongs to the CLPTM1 family. Ubiquitously expressed.

It is found in the endoplasmic reticulum membrane. The enzyme catalyses a 6-(alpha-D-glucosaminyl)-1-(1,2-diacyl-sn-glycero-3-phospho)-1D-myo-inositol(in) = a 6-(alpha-D-glucosaminyl)-1-(1,2-diacyl-sn-glycero-3-phospho)-1D-myo-inositol(out). It catalyses the reaction 6-(alpha-D-glucosaminyl)-(1-octadecanoyl,2-(9Z)-octadecenoyl-sn-glycero-3-phospho)-1D-myo-inositol(in) = 6-(alpha-D-glucosaminyl)-(1-octadecanoyl,2-(9Z)-octadecenoyl-sn-glycero-3-phospho)-1D-myo-inositol(out). It carries out the reaction a 1,2-diacyl-sn-glycero-3-phospho-(1D-myo-inositol)(in) = a 1,2-diacyl-sn-glycero-3-phospho-(1D-myo-inositol)(out). The catalysed reaction is a 1,2-diacyl-sn-glycero-3-phosphocholine(in) = a 1,2-diacyl-sn-glycero-3-phosphocholine(out). The enzyme catalyses a 1,2-diacyl-sn-glycero-3-phosphoethanolamine(in) = a 1,2-diacyl-sn-glycero-3-phosphoethanolamine(out). Its function is as follows. Scramblase that mediates the translocation of glucosaminylphosphatidylinositol (alpha-D-GlcN-(1-6)-(1,2-diacyl-sn-glycero-3-phospho)-1D-myo-inositol, GlcN-PI) across the endoplasmic reticulum (ER) membrane, from the cytosolic leaflet to the luminal leaflet of the ER membrane, where it participates in the biosynthesis of glycosylphosphatidylinositol (GPI). GPI is a lipid glycoconjugate involved in post-translational modification of proteins. Can also translocate 1,2-diacyl-sn-glycero-3-phospho-(1D-myo-inositol) (phosphatidylinositol or PI), as well as several other phospholipids (1,2-diacyl-sn-glycero-3-phosphocholine, 1,2-diacyl-sn-glycero-3-phosphoethanolamine), and N-acetylglucosaminylphosphatidylinositol (GlcNAc-PI) in vitro. The protein is Lipid scramblase CLPTM1L (CLPTM1L) of Homo sapiens (Human).